The following is a 676-amino-acid chain: MSPLALIVLLAWHATAFKSTDTIEVIPLPHTSGFYYQPINRMQFVEDVWHFIIEVDHGVIFQELDELYRDTLHLLNHTRSSKFVSANCTTNAIIESEINTYILKRILYLVQQHNTIDDKIKANAEGDAPDSRWELNTKDPLAPRRKRGVLNFVGTVDKFLFGVMDSNDARELHDLAKTSNALNEQIKEVTDELVNIAKFEEHKQCLERQRDDLCGYATAKMALITEQLTQLDLLYTNLDRAVDDALDNRINSLIMTPQRLYEEMTNVTVHVPTKLTWPVPLKKTNMHDLINDKIVKTHVFKLERRKLIFILEVPLIDDQNYDVYQVIPIPLCGGDGKCAVIVPDSKYLGVSTNKRNYVRLEDDAPKACKMTSKNLLCFKPKVVHVSSEATLCDIKILLHYENSYENVQRDCDVRVGKFDPEIFHLISDYNNWLYVLQRDTELTMDCADASSASNVIRIAAGTGIIRGRNVTRSCNLMTKSKQLALHQLKNSLFSVSAVPLSTSFNLSAALGDLDRLEIESMKNNADLDHKHLQGATQRLIDLRKRMNNNSVFHGAELEGEASDGWFCWLVGWLNIKCATAEAVVACVVLFLVALLLFRIYRFCCPGTCSAMFSCCRFDALSSVPRRRNKTKSSVIRVNSQLQYLDGGGGGEKSHEETPMVMFNNRARDPNVVFKNI.

Positions 1-16 (MSPLALIVLLAWHATA) are cleaved as a signal peptide. Residues asparagine 76 and asparagine 87 are each glycosylated (N-linked (GlcNAc...) asparagine; by host). Positions 169 to 215 (ARELHDLAKTSNALNEQIKEVTDELVNIAKFEEHKQCLERQRDDLCG) form a coiled coil. N-linked (GlcNAc...) asparagine; by host glycosylation is found at asparagine 266, asparagine 469, asparagine 505, and asparagine 548. The helical transmembrane segment at 577–597 (CATAEAVVACVVLFLVALLLF) threads the bilayer. N-linked (GlcNAc...) asparagine; by host glycosylation is present at asparagine 628.

N-glycosylated.

Its subcellular location is the virion membrane. The protein resides in the host cell membrane. Envelope glycoprotein which mediates the fusion of viral and host endosomal membranes leading to virus entry into the host cell. The polypeptide is Envelope fusion protein (Lepidoptera (butterflies and moths)).